We begin with the raw amino-acid sequence, 161 residues long: Nucleotide-binding protein lpl1175 (161 aa).

This sequence belongs to the YajQ family.

Functionally, nucleotide-binding protein. The polypeptide is Nucleotide-binding protein lpl1175 (Legionella pneumophila (strain Lens)).